The following is a 198-amino-acid chain: T-cell surface glycoprotein CD3 epsilon chain (198 aa).

The first 21 residues, 1-21 (MRAGTLWRVLALWLLSVAAWG), serve as a signal peptide directing secretion. At 22-120 (QEDDDHADDY…EACMEVDLTT (99 aa)) the chain is on the extracellular side. The Ig-like domain occupies 28-106 (ADDYTQKLFT…KENEHILYLK (79 aa)). Residues cysteine 49 and cysteine 90 are joined by a disulfide bond. A helical membrane pass occupies residues 121–141 (VASIVVADVCVTLGLLLLVYY). Over 142–198 (WSKNRKAKCKPVTRGAGAGGRPRGQNKERPPPVPNPDYEPIRKGQRDLYSGLNQRGI) the chain is Cytoplasmic. Residues 153–198 (VTRGAGAGGRPRGQNKERPPPVPNPDYEPIRKGQRDLYSGLNQRGI) form a disordered region. An NUMB-binding region region spans residues 166–183 (QNKERPPPVPNPDYEPIR). The 28-residue stretch at 169–196 (ERPPPVPNPDYEPIRKGQRDLYSGLNQR) folds into the ITAM domain. Residues 170–177 (RPPPVPNP) are proline-rich sequence. Tyrosine 179 and tyrosine 190 each carry phosphotyrosine.

The TCR-CD3 complex is composed of a CD3D/CD3E and a CD3G/CD3E heterodimers that preferentially associate with TCRalpha and TCRbeta, respectively, to form TCRalpha/CD3E/CD3G and TCRbeta/CD3G/CD3E trimers. In turn, the hexamer interacts with CD3Z homodimer to form the TCR-CD3 complex. Alternatively, TCRalpha and TCRbeta can be replaced by TCRgamma and TCRdelta. Interacts with CD6. Interacts (via Proline-rich sequence) with NCK1; the interaction is ligand dependent but independent of tyrosine kinase activation. Phosphorylated on Tyr residues after T-cell receptor triggering by LCK in association with CD4/CD8.

It localises to the cell membrane. Functionally, part of the TCR-CD3 complex present on T-lymphocyte cell surface that plays an essential role in adaptive immune response. When antigen presenting cells (APCs) activate T-cell receptor (TCR), TCR-mediated signals are transmitted across the cell membrane by the CD3 chains CD3D, CD3E, CD3G and CD3Z. All CD3 chains contain immunoreceptor tyrosine-based activation motifs (ITAMs) in their cytoplasmic domain. Upon TCR engagement, these motifs become phosphorylated by Src family protein tyrosine kinases LCK and FYN, resulting in the activation of downstream signaling pathways. In addition of this role of signal transduction in T-cell activation, CD3E plays an essential role in correct T-cell development. Also participates in internalization and cell surface down-regulation of TCR-CD3 complexes via endocytosis sequences present in CD3E cytosolic region. In addition to its role as a TCR coreceptor, it serves as a receptor for ITPRIPL1. Ligand recognition inhibits T-cell activation by promoting interaction with NCK1, which prevents CD3E-ZAP70 interaction and blocks the ERK-NFkB signaling cascade and calcium influx. The chain is T-cell surface glycoprotein CD3 epsilon chain (CD3E) from Oryctolagus cuniculus (Rabbit).